A 354-amino-acid polypeptide reads, in one-letter code: Probable protein phosphatase 2C 27 (354 aa).

The 266-residue stretch at 54 to 319 (RSGDWSDIGG…DNLTAVMVSF (266 aa)) folds into the PPM-type phosphatase domain. 4 residues coordinate Mn(2+): Asp98, Gly99, Asp267, and Asp310.

It belongs to the PP2C family. It depends on Mg(2+) as a cofactor. Mn(2+) is required as a cofactor.

The enzyme catalyses O-phospho-L-seryl-[protein] + H2O = L-seryl-[protein] + phosphate. It catalyses the reaction O-phospho-L-threonyl-[protein] + H2O = L-threonyl-[protein] + phosphate. The polypeptide is Probable protein phosphatase 2C 27 (Oryza sativa subsp. japonica (Rice)).